We begin with the raw amino-acid sequence, 619 residues long: Guanylate cyclase soluble subunit beta-1 (619 aa).

Histidine 105 is a heme binding site. Residues 421 to 554 (TILFSGIVGF…NTVNLTSRTE (134 aa)) form the Guanylate cyclase domain.

Belongs to the adenylyl cyclase class-4/guanylyl cyclase family. In terms of assembly, the active enzyme is formed by a heterodimer of an alpha and a beta subunit. Heterodimer with GUCY1A1. Can also form inactive homodimers in vitro. Heme serves as cofactor. In terms of tissue distribution, lung and brain.

It is found in the cytoplasm. It carries out the reaction GTP = 3',5'-cyclic GMP + diphosphate. Its activity is regulated as follows. Activated by nitric oxide in the presence of magnesium or manganese ions, binding of NO to the heme iron increases catalytic activity up to 400 folds. Its function is as follows. Mediates responses to nitric oxide (NO) by catalyzing the biosynthesis of the signaling molecule cGMP. In Bos taurus (Bovine), this protein is Guanylate cyclase soluble subunit beta-1 (GUCY1B1).